The sequence spans 318 residues: Pantothenate kinase (318 aa).

96–103 (GSVAVGKS) is a binding site for ATP.

The protein belongs to the prokaryotic pantothenate kinase family.

It is found in the cytoplasm. It carries out the reaction (R)-pantothenate + ATP = (R)-4'-phosphopantothenate + ADP + H(+). It participates in cofactor biosynthesis; coenzyme A biosynthesis; CoA from (R)-pantothenate: step 1/5. The sequence is that of Pantothenate kinase from Coxiella burnetii (strain Dugway 5J108-111).